We begin with the raw amino-acid sequence, 582 residues long: Insulin-like growth factor 2 mRNA-binding protein 3 (582 aa).

RRM domains follow at residues 2 to 75 (NKLY…HSVP) and 81 to 156 (CKLQ…YIPD). The interval 164–190 (PAVGGRRGFNPRGPPRQGSPSLGARPK) is disordered. Serine 182 is modified (phosphoserine). 4 KH domains span residues 194 to 259 (DVPL…CRNI), 275 to 342 (EIPL…EEEI), 408 to 473 (SETV…QGRI), and 490 to 556 (KLEA…QRKI). The disordered stretch occupies residues 562 to 582 (QVRRQQQPKPSAAGPPVARRK).

It belongs to the RRM IMP/VICKZ family. As to quaternary structure, homodimer and multimer.

It is found in the cytoplasm. It localises to the nucleus. Its subcellular location is the P-body. The protein resides in the stress granule. Its function is as follows. RNA-binding factor that may recruit target transcripts to cytoplasmic protein-RNA complexes (mRNPs). This transcript 'caging' into mRNPs allows mRNA transport and transient storage. It also modulates the rate and location at which target transcripts encounter the translational apparatus and shields them from endonuclease attacks or microRNA-mediated degradation. Preferentially binds to N6-methyladenosine (m6A)-containing mRNAs and increases their stability. Involved in neuronal crest migration. In Danio rerio (Zebrafish), this protein is Insulin-like growth factor 2 mRNA-binding protein 3 (igf2bp3).